The sequence spans 80 residues: Putative ankyrin repeat protein RC0877 (80 aa).

Residues 6–46 form an ANK repeat; that stretch reads SGGIPLHAVAKNVRCTSKDIKDYEIYKLLVSYGADINARVE.

This chain is Putative ankyrin repeat protein RC0877, found in Rickettsia conorii (strain ATCC VR-613 / Malish 7).